A 249-amino-acid chain; its full sequence is 4-hydroxy-tetrahydrodipicolinate reductase (249 aa).

Residues 77–79 and 101–104 each bind NAD(+); these read ATT and SYNT. The active-site Proton donor/acceptor is histidine 133. Histidine 134 lines the (S)-2,3,4,5-tetrahydrodipicolinate pocket. Lysine 137 functions as the Proton donor in the catalytic mechanism. Residue 143–144 participates in (S)-2,3,4,5-tetrahydrodipicolinate binding; that stretch reads GT.

It belongs to the DapB family.

The protein resides in the cytoplasm. It catalyses the reaction (S)-2,3,4,5-tetrahydrodipicolinate + NAD(+) + H2O = (2S,4S)-4-hydroxy-2,3,4,5-tetrahydrodipicolinate + NADH + H(+). It carries out the reaction (S)-2,3,4,5-tetrahydrodipicolinate + NADP(+) + H2O = (2S,4S)-4-hydroxy-2,3,4,5-tetrahydrodipicolinate + NADPH + H(+). Its pathway is amino-acid biosynthesis; L-lysine biosynthesis via DAP pathway; (S)-tetrahydrodipicolinate from L-aspartate: step 4/4. Functionally, catalyzes the conversion of 4-hydroxy-tetrahydrodipicolinate (HTPA) to tetrahydrodipicolinate. This chain is 4-hydroxy-tetrahydrodipicolinate reductase, found in Exiguobacterium sp. (strain ATCC BAA-1283 / AT1b).